Consider the following 257-residue polypeptide: Phosphate import ATP-binding protein PstB (257 aa).

Positions 11-252 (IQVRDLNFYY…PAKKQTEDYI (242 aa)) constitute an ABC transporter domain. Position 43-50 (43-50 (GPSGCGKS)) interacts with ATP.

It belongs to the ABC transporter superfamily. Phosphate importer (TC 3.A.1.7) family. The complex is composed of two ATP-binding proteins (PstB), two transmembrane proteins (PstC and PstA) and a solute-binding protein (PstS).

It is found in the cell inner membrane. The catalysed reaction is phosphate(out) + ATP + H2O = ADP + 2 phosphate(in) + H(+). Part of the ABC transporter complex PstSACB involved in phosphate import. Responsible for energy coupling to the transport system. The sequence is that of Phosphate import ATP-binding protein PstB from Enterobacter cloacae.